A 380-amino-acid polypeptide reads, in one-letter code: 3-dehydroquinate synthase (380 aa).

This sequence belongs to the archaeal-type DHQ synthase family.

The enzyme catalyses 2-amino-2,3,7-trideoxy-D-lyxo-hept-6-ulosonate + NAD(+) + H2O = 3-dehydroquinate + NH4(+) + NADH + H(+). In terms of biological role, catalyzes the oxidative deamination and cyclization of 2-amino-3,7-dideoxy-D-threo-hept-6-ulosonic acid (ADH) to yield 3-dehydroquinate (DHQ), which is fed into the canonical shikimic pathway of aromatic amino acid biosynthesis. The protein is 3-dehydroquinate synthase of Methanosarcina acetivorans (strain ATCC 35395 / DSM 2834 / JCM 12185 / C2A).